The sequence spans 66 residues: Large ribosomal subunit protein bL33 (66 aa).

It belongs to the bacterial ribosomal protein bL33 family.

This is Large ribosomal subunit protein bL33 from Synechococcus sp. (strain CC9311).